The following is a 475-amino-acid chain: MALKPEKVKSSKSASTVDAKSLAEKIKKNALKQKKQAPVTEKPEEIVETTSEASQDVNSEQQFHTFSELNLVPELMEAIEKLKYTKPTPIQSGAIPHALEGKDIIGLAQTGSGKTAAFAIPILQSLWEAQRPYYALVLAPTRELAYQIKETFDALGSGMGVRSVCIVGGMDMMDQARDLMRKPHILVATPGRIMDHLENTKGFSLKSLQYLVMDEADRLLDMDFGPALDKILKVIPTKRTTYLFSATMTNKIAKLQRASLHEPVKVAVSNKYQTADNLVQSMMLVSDGYKNTFLIHLLNEFMGKSIIVFTRTCAHTQRSTLLARILGFSAVPLHGQLTQSQRLGSLNKFKSGKANILIATDVAARGLDIPSVDVVINYDIPTDSKAYIHRVGRTARAGKSGKSISLVTQYDLEMYLRIESVLGFKLPKDPSPPRDVLNALHVHVDRASAEAIKQTKDFHEKRTKKKRDDRDREER.

Positions 30–59 (ALKQKKQAPVTEKPEEIVETTSEASQDVNS) are disordered. The segment covering 48–59 (ETTSEASQDVNS) has biased composition (polar residues). The Q motif signature appears at 64–92 (HTFSELNLVPELMEAIEKLKYTKPTPIQS). The Helicase ATP-binding domain occupies 95–266 (IPHALEGKDI…RASLHEPVKV (172 aa)). An ATP-binding site is contributed by 108–115 (AQTGSGKT). A DEAD box motif is present at residues 214–217 (DEAD). The Helicase C-terminal domain maps to 293–437 (FLIHLLNEFM…KDPSPPRDVL (145 aa)). The disordered stretch occupies residues 451–475 (AIKQTKDFHEKRTKKKRDDRDREER).

It belongs to the DEAD box helicase family. DDX47/RRP3 subfamily.

It is found in the nucleus. Its function is as follows. Required for pre-ribosomal RNA processing. Involved in the maturation of the 35S-pre-rRNA and to its cleavage to mature 18S rRNA. In Meyerozyma guilliermondii (strain ATCC 6260 / CBS 566 / DSM 6381 / JCM 1539 / NBRC 10279 / NRRL Y-324) (Yeast), this protein is ATP-dependent rRNA helicase RRP3 (RRP3).